A 403-amino-acid chain; its full sequence is Acetate kinase (403 aa).

Residue N7 participates in Mg(2+) binding. K14 is a binding site for ATP. R95 contributes to the substrate binding site. D152 acts as the Proton donor/acceptor in catalysis. ATP-binding positions include 212–216 (HLGNG), 286–288 (DMR), and 335–339 (GIGEN). E389 is a binding site for Mg(2+).

The protein belongs to the acetokinase family. As to quaternary structure, homodimer. Mg(2+) serves as cofactor. Mn(2+) is required as a cofactor.

It localises to the cytoplasm. It catalyses the reaction acetate + ATP = acetyl phosphate + ADP. It functions in the pathway metabolic intermediate biosynthesis; acetyl-CoA biosynthesis; acetyl-CoA from acetate: step 1/2. Its function is as follows. Catalyzes the formation of acetyl phosphate from acetate and ATP. Can also catalyze the reverse reaction. This chain is Acetate kinase, found in Desulfovibrio desulfuricans (strain ATCC 27774 / DSM 6949 / MB).